Reading from the N-terminus, the 65-residue chain is MAARCAVCGKGPQTGYTVSHSHIRNKRRFLPNLQPVRTTVDGQNVRLRVCTKCLKAGKVQRVKVA.

The protein belongs to the bacterial ribosomal protein bL28 family.

The protein is Large ribosomal subunit protein bL28 of Bifidobacterium animalis subsp. lactis (strain AD011).